A 1353-amino-acid chain; its full sequence is MSFFYSLFAPLIFLVTFIYNHVLLILFTVCIIGAAAFFVSYYLFGYSNTPSSASSSATPSSRNSPNKERSKKVPTILETDNEDDEIRVNGSPKSGTPTNTQTIEPPTSLNLNMVNSASGSNLSGARRMRKRDWAKKLYKSLVQDSPGRTPTDESSDEENANVVMGGGSVPRRRSKHGNSSRRRQSTAFQLAKDLIRRGSRSYFRQNQENNKDTRVRPPQEFFEPTDLPEIPQNLQPEIFYILHNLKMLELPSEWKLDPREIEVRSFQAGDYIVKPGESDDAIYVAIDGELTVHIRHMEGKEYLVKCIPAGGSFFSLLSMLDILMDFPSIFRTVALKAADPCRVAKFPITSFRESYHKNPEAWIRPIQIVITRLLHVTLTTLHQYMGLSSELMRRRRDDDRHRNGSSTSKLQLSLSLKKKEKPFNINDNEQDQLIVARKWMAEAFGLVADDVVSEQIGSKIHLESYEAGHVIIEQGAEEEVLMMVLHGNLILAQYGSDFFAQIERESLFDEENNEEDESAVIRVTARELVGGLQILTNEPSFYTIRAAVQTRVAIMKKKDFSAFLEAHPEIYLPVAHSVLRRLSPFLRGVDFALDWVLVDSGHACYRAGDMADSLFVVLSGRLRSVEKKTVVEEFGRGDVLGMMEVLTKKPRATTVLAVRFSQLARVPEGLLNFIKMQYPQVGFRLVQLLGQYYSQTNRRAPFAAPTVIRTNELGATDPMSHIKNLHTIAVVPASPDVPLVPFTCELYHALSSNLRVLRLSSQKVAACLDPSVLEKQADFRLMHWLNVQEDTYPLVIYECDFTQTNWTRRCLRQADAILVVAIGGKTPEKQTLMRELMNMNQDGVRTNKELILLWPESTKTPSGTIEWLKNSYFSGHHHIRAPKRMLQWNRKFRKMSRAEVMTPTSVENEVIEYYEKNVFWTPDRRSDFSRLARILTGNAIGLVLGGGGARGAAHVGVLRALREEGIPVDIVGGTSIGSLIGGLYAETPDDVVVETRAASWFNGMSSLWRKLLDLTYAHSAMFTGAQFNFSIKDLFEERLIEDLWISYFCISTDISTSEMRVHRSGPLWAYCRASMSLAGYLPPLCDPQDGHLLLDGGYVNNVPADVMRNLGARCVIACDVGSIEETNLYDYGDSLSGMWVLLKRLNPFGTPPRILNMEEIQSRLAYVSCVRQLEVVKKASYCRYLRPPIEPFKTLDFPKFQEIMELGLKYGREACHELITNDRAGILGDEKETRKFKRQQSRREKPDVSRAVSFTDLAAAMSKIPVVRPTLRHSMSLNPSANGPVGRAGDHFLLDDDLFNDTDYYEEESSQSENGNESFTEDEDLVIGPPSSSSSGGNVSENPRGTTPRPPSS.

A helical transmembrane segment spans residues Ile-12–Ile-32. The segment covering Thr-49–Ser-64 has biased composition (low complexity). Disordered stretches follow at residues Thr-49–Phe-188 and Ser-199–Pro-218. A compositionally biased stretch (polar residues) spans Ser-91–Ser-123. 2 stretches are compositionally biased toward basic residues: residues Arg-126–Tyr-138 and Pro-170–Gln-184. A nucleoside 3',5'-cyclic phosphate contacts are provided by residues Leu-245–Arg-372, Phe-444–Arg-581, and Ile-570–Tyr-692. Positions Leu-942–Arg-1108 constitute a PNPLA domain. The GXGXXG signature appears at Gly-946–Gly-951. The GXSXG motif lies at Gly-973–Gly-977. The Nucleophile role is filled by Ser-975. The active-site Proton acceptor is Asp-1095. A DGA/G motif is present at residues Asp-1095–Gly-1097. 3 disordered regions span residues Glu-1230–Ser-1249, Ser-1274–Leu-1293, and Tyr-1305–Ser-1353. Positions Gly-1328–Gly-1337 are enriched in low complexity.

Belongs to the NTE family.

The protein resides in the membrane. In Caenorhabditis elegans, this protein is Patatin-like phospholipase domain-containing protein ZK370.4.